Consider the following 338-residue polypeptide: Aspartate carbamoyltransferase catalytic subunit (338 aa).

The carbamoyl phosphate site is built by arginine 59 and threonine 60. Lysine 87 contacts L-aspartate. 3 residues coordinate carbamoyl phosphate: arginine 109, histidine 142, and glutamine 145. Residues arginine 182 and arginine 253 each contribute to the L-aspartate site. 2 residues coordinate carbamoyl phosphate: glycine 294 and proline 295.

Belongs to the aspartate/ornithine carbamoyltransferase superfamily. ATCase family. As to quaternary structure, heterododecamer (2C3:3R2) of six catalytic PyrB chains organized as two trimers (C3), and six regulatory PyrI chains organized as three dimers (R2).

It catalyses the reaction carbamoyl phosphate + L-aspartate = N-carbamoyl-L-aspartate + phosphate + H(+). It functions in the pathway pyrimidine metabolism; UMP biosynthesis via de novo pathway; (S)-dihydroorotate from bicarbonate: step 2/3. Functionally, catalyzes the condensation of carbamoyl phosphate and aspartate to form carbamoyl aspartate and inorganic phosphate, the committed step in the de novo pyrimidine nucleotide biosynthesis pathway. This is Aspartate carbamoyltransferase catalytic subunit from Prochlorococcus marinus (strain MIT 9301).